A 273-amino-acid polypeptide reads, in one-letter code: 3-methyl-2-oxobutanoate hydroxymethyltransferase (273 aa).

Residues aspartate 53 and aspartate 92 each contribute to the Mg(2+) site. Residues 53-54 (DS), aspartate 92, and lysine 120 contribute to the 3-methyl-2-oxobutanoate site. Glutamate 122 is a Mg(2+) binding site. The Proton acceptor role is filled by glutamate 189.

It belongs to the PanB family. As to quaternary structure, homodecamer; pentamer of dimers. It depends on Mg(2+) as a cofactor.

Its subcellular location is the cytoplasm. It catalyses the reaction 3-methyl-2-oxobutanoate + (6R)-5,10-methylene-5,6,7,8-tetrahydrofolate + H2O = 2-dehydropantoate + (6S)-5,6,7,8-tetrahydrofolate. It participates in cofactor biosynthesis; (R)-pantothenate biosynthesis; (R)-pantoate from 3-methyl-2-oxobutanoate: step 1/2. Catalyzes the reversible reaction in which hydroxymethyl group from 5,10-methylenetetrahydrofolate is transferred onto alpha-ketoisovalerate to form ketopantoate. The protein is 3-methyl-2-oxobutanoate hydroxymethyltransferase of Cupriavidus pinatubonensis (strain JMP 134 / LMG 1197) (Cupriavidus necator (strain JMP 134)).